Consider the following 450-residue polypeptide: Methionine aminopeptidase 2-2 (450 aa).

Basic and acidic residues-rich tracts occupy residues 1–10 and 30–39; these read MGAKISEDHP and RGAHLSRDGD. The tract at residues 1-100 is disordered; the sequence is MGAKISEDHP…PPRVPLSELF (100 aa). Residues 47 to 56 show a composition bias toward acidic residues; that stretch reads GDDDDDDDEG. Positions 69–86 are enriched in basic residues; it reads KKKKKKRKPKKKKAKKAT. H211 contributes to the substrate binding site. The a divalent metal cation site is built by D232, D243, and H302. A substrate-binding site is contributed by H310. A divalent metal cation-binding residues include E335 and E431.

This sequence belongs to the peptidase M24A family. Methionine aminopeptidase eukaryotic type 2 subfamily. Co(2+) is required as a cofactor. Requires Zn(2+) as cofactor. The cofactor is Mn(2+). Fe(2+) serves as cofactor.

The protein resides in the cytoplasm. The enzyme catalyses Release of N-terminal amino acids, preferentially methionine, from peptides and arylamides.. In terms of biological role, cotranslationally removes the N-terminal methionine from nascent proteins. The N-terminal methionine is often cleaved when the second residue in the primary sequence is small and uncharged (Met-Ala-, Cys, Gly, Pro, Ser, Thr, or Val). This chain is Methionine aminopeptidase 2-2, found in Fusarium vanettenii (strain ATCC MYA-4622 / CBS 123669 / FGSC 9596 / NRRL 45880 / 77-13-4) (Fusarium solani subsp. pisi).